The chain runs to 626 residues: 5'-AMP-activated protein kinase catalytic subunit alpha-2 (626 aa).

The span at 1 to 24 (MFSHQDRDRDRKEDGGGDGTEMKS) shows a compositional bias: basic and acidic residues. Residues 1–77 (MFSHQDRDRD…GETSTKQQQE (77 aa)) are disordered. The segment covering 38–49 (NLSRKLSAKSRK) has biased composition (basic residues). The span at 58-77 (DNSSKMSSPGGETSTKQQQE) shows a compositional bias: polar residues. The region spanning 87–339 (YILKETLGVG…IKDVIAHEWF (253 aa)) is the Protein kinase domain. Residues 93–101 (LGVGTFGKV) and Lys116 contribute to the ATP site. The Proton acceptor role is filled by Asp210. Thr243 is modified (phosphothreonine; by par-4). Residues 541 to 568 (SGSASASSSRHASMSMPQKPAGIRGTRT) are disordered. A compositionally biased stretch (low complexity) spans 542 to 555 (GSASASSSRHASMS).

It belongs to the protein kinase superfamily. CAMK Ser/Thr protein kinase family. SNF1 subfamily. Tetramer, composed of 2 regulatory (R) and 2 catalytic (C) subunits. In the presence of cAMP it dissociates into 2 active monomeric C subunits and an R dimer that binds four cAMP molecules. Phosphorylated on Thr-243 in response to oxidative stress and during dauer development. Phosphorylation at Thr-243 is increased in response to sodium azide or the AMP analog AICAR (5-amino-1-(5-phospho-beta-D-ribosyl)imidazole-4-carboxamide). Expressed in the pharynx, the ventral cord, neurons including the hermaphrodite-specific neuron, body wall muscles, the vulva, the excretory canal, and weakly in the intestine.

It catalyses the reaction L-seryl-[protein] + ATP = O-phospho-L-seryl-[protein] + ADP + H(+). The enzyme catalyses L-threonyl-[protein] + ATP = O-phospho-L-threonyl-[protein] + ADP + H(+). Its activity is regulated as follows. Activated by phosphorylation. Functionally, acts as a sensor that couples lifespan to information about energy levels and insulin-like signals. Role in motility and response to oxidative stress. Involved in the establishment of germline stem cell (GSC) quiescence during dauer development. Plays a role in axon regrowth after axotomy in PLM neurons. Plays a role in the maintenance of glycogen stores which are necessary for resistance to hyperosmotic stress. Plays a role in the regulation of flp-7 secretion from ASI neurons. Keeps the CREB-regulated transcription coactivator 1 homolog crtc-1 inactive which in turn inhibits flp-7 secretion. Following serotonin signaling, derepresses crtc-1 which stimulates flp-7 secretion and subsequent body fat loss. The chain is 5'-AMP-activated protein kinase catalytic subunit alpha-2 from Caenorhabditis elegans.